The chain runs to 227 residues: ATP phosphoribosyltransferase (227 aa).

The protein belongs to the ATP phosphoribosyltransferase family. Short subfamily. As to quaternary structure, heteromultimer composed of HisG and HisZ subunits.

It localises to the cytoplasm. The catalysed reaction is 1-(5-phospho-beta-D-ribosyl)-ATP + diphosphate = 5-phospho-alpha-D-ribose 1-diphosphate + ATP. It participates in amino-acid biosynthesis; L-histidine biosynthesis; L-histidine from 5-phospho-alpha-D-ribose 1-diphosphate: step 1/9. Functionally, catalyzes the condensation of ATP and 5-phosphoribose 1-diphosphate to form N'-(5'-phosphoribosyl)-ATP (PR-ATP). Has a crucial role in the pathway because the rate of histidine biosynthesis seems to be controlled primarily by regulation of HisG enzymatic activity. The chain is ATP phosphoribosyltransferase from Bordetella avium (strain 197N).